A 1183-amino-acid chain; its full sequence is Probable RNA-dependent RNA polymerase 4 (1183 aa).

Belongs to the RdRP family. As to expression, expressed in shoot apical meristem (SAM) and panicles.

It catalyses the reaction RNA(n) + a ribonucleoside 5'-triphosphate = RNA(n+1) + diphosphate. Probably involved in the RNA silencing pathway and required for the generation of small interfering RNAs (siRNAs). This is Probable RNA-dependent RNA polymerase 4 (RDR4) from Oryza sativa subsp. japonica (Rice).